The following is a 236-amino-acid chain: Ubiquinone biosynthesis O-methyltransferase (236 aa).

4 residues coordinate S-adenosyl-L-methionine: arginine 39, glycine 59, aspartate 80, and methionine 124.

This sequence belongs to the methyltransferase superfamily. UbiG/COQ3 family.

The enzyme catalyses a 3-demethylubiquinol + S-adenosyl-L-methionine = a ubiquinol + S-adenosyl-L-homocysteine + H(+). It carries out the reaction a 3-(all-trans-polyprenyl)benzene-1,2-diol + S-adenosyl-L-methionine = a 2-methoxy-6-(all-trans-polyprenyl)phenol + S-adenosyl-L-homocysteine + H(+). The protein operates within cofactor biosynthesis; ubiquinone biosynthesis. In terms of biological role, O-methyltransferase that catalyzes the 2 O-methylation steps in the ubiquinone biosynthetic pathway. In Shewanella sp. (strain ANA-3), this protein is Ubiquinone biosynthesis O-methyltransferase.